We begin with the raw amino-acid sequence, 155 residues long: SsrA-binding protein (155 aa).

The protein belongs to the SmpB family.

The protein localises to the cytoplasm. Required for rescue of stalled ribosomes mediated by trans-translation. Binds to transfer-messenger RNA (tmRNA), required for stable association of tmRNA with ribosomes. tmRNA and SmpB together mimic tRNA shape, replacing the anticodon stem-loop with SmpB. tmRNA is encoded by the ssrA gene; the 2 termini fold to resemble tRNA(Ala) and it encodes a 'tag peptide', a short internal open reading frame. During trans-translation Ala-aminoacylated tmRNA acts like a tRNA, entering the A-site of stalled ribosomes, displacing the stalled mRNA. The ribosome then switches to translate the ORF on the tmRNA; the nascent peptide is terminated with the 'tag peptide' encoded by the tmRNA and targeted for degradation. The ribosome is freed to recommence translation, which seems to be the essential function of trans-translation. The chain is SsrA-binding protein from Chelativorans sp. (strain BNC1).